Consider the following 84-residue polypeptide: Exodeoxyribonuclease 7 small subunit (84 aa).

It belongs to the XseB family. In terms of assembly, heterooligomer composed of large and small subunits.

The protein localises to the cytoplasm. The enzyme catalyses Exonucleolytic cleavage in either 5'- to 3'- or 3'- to 5'-direction to yield nucleoside 5'-phosphates.. In terms of biological role, bidirectionally degrades single-stranded DNA into large acid-insoluble oligonucleotides, which are then degraded further into small acid-soluble oligonucleotides. This chain is Exodeoxyribonuclease 7 small subunit, found in Janthinobacterium sp. (strain Marseille) (Minibacterium massiliensis).